A 309-amino-acid chain; its full sequence is MSFKFNFQVDEDENDNGNNNEQNNEESKLDISEFDSSSKMDELPSKYIDLRNNLSSLLSNVETEIVTFSSNNKLKKLVKPFKGNQDNNNDNNVNSNDKNDNNNNNNNNNKDYEKLLDKTDLIPGVYEGGFKLWECSIDIINYLFEEKIDLSGKKVLEIGCGHGLPGIYCLLNGSIVTFQDYNEEVIYNLTQPNVLINGGDINRAKYISGDWKFVDQLLKNEKFDIILTSDTLYNVGSFKKLYNLISNHLESNGKCYLASKTYYFGVGGGIRKFEELLKILNRLSIKTVRDIKDGLSNVREVVEITNKIN.

Disordered regions lie at residues 1-37 (MSFK…FDSS) and 79-111 (KPFK…NNKD). Positions 25 to 37 (EESKLDISEFDSS) are enriched in basic and acidic residues. The span at 84 to 109 (NQDNNNDNNVNSNDKNDNNNNNNNNN) shows a compositional bias: low complexity. S-adenosyl-L-methionine contacts are provided by residues 132–136 (LWECS), G159, 179–181 (QDY), 209–211 (GDW), and S229.

It belongs to the methyltransferase superfamily. METTL18 family.

The protein localises to the cytoplasm. It is found in the cytosol. It localises to the nucleus. Its subcellular location is the nucleolus. It carries out the reaction L-histidyl-[protein] + S-adenosyl-L-methionine = N(tele)-methyl-L-histidyl-[protein] + S-adenosyl-L-homocysteine + H(+). Its function is as follows. Protein-L-histidine N-tele-methyltransferase that probably monomethylates RPL3. Through the methylation of RPL3 may regulate the dynamics of pre-rRNA processing, ribosome biogenesis, and translation. This is Histidine protein methyltransferase 1 homolog from Dictyostelium discoideum (Social amoeba).